A 298-amino-acid polypeptide reads, in one-letter code: O-glycoside alpha-1,2-mannosyltransferase homolog 6 (298 aa).

Residue glutamate 220 is the Nucleophile of the active site.

The protein belongs to the glycosyltransferase 15 family.

It localises to the cytoplasm. The protein resides in the nucleus. Its function is as follows. Probable mannosyltransferase involved in O-glycosylation of cell wall and secreted proteins. The chain is O-glycoside alpha-1,2-mannosyltransferase homolog 6 (omh6) from Schizosaccharomyces pombe (strain 972 / ATCC 24843) (Fission yeast).